Reading from the N-terminus, the 717-residue chain is Ribosomal RNA large subunit methyltransferase K/L (717 aa).

A THUMP domain is found at 43-154 (IGYKACLWSR…KGKANITLDL (112 aa)).

The protein belongs to the methyltransferase superfamily. RlmKL family.

The protein resides in the cytoplasm. The enzyme catalyses guanosine(2445) in 23S rRNA + S-adenosyl-L-methionine = N(2)-methylguanosine(2445) in 23S rRNA + S-adenosyl-L-homocysteine + H(+). It carries out the reaction guanosine(2069) in 23S rRNA + S-adenosyl-L-methionine = N(2)-methylguanosine(2069) in 23S rRNA + S-adenosyl-L-homocysteine + H(+). Functionally, specifically methylates the guanine in position 2445 (m2G2445) and the guanine in position 2069 (m7G2069) of 23S rRNA. In Aeromonas hydrophila subsp. hydrophila (strain ATCC 7966 / DSM 30187 / BCRC 13018 / CCUG 14551 / JCM 1027 / KCTC 2358 / NCIMB 9240 / NCTC 8049), this protein is Ribosomal RNA large subunit methyltransferase K/L.